Here is a 505-residue protein sequence, read N- to C-terminus: Monocarboxylate transporter 10 (505 aa).

A compositionally biased stretch (acidic residues) spans Met1–Pro14. Positions Met1–Pro64 are disordered. Over Met1–Glu66 the chain is Cytoplasmic. A compositionally biased stretch (pro residues) spans Glu15 to Glu31. Residues Pro32 to Glu41 show a composition bias toward acidic residues. A helical membrane pass occupies residues Gly67–Ile87. The Extracellular segment spans residues Gln88–Thr114. Residues Ala115–Phe135 traverse the membrane as a helical segment. Residues Thr136–Arg142 are Cytoplasmic-facing. A helical transmembrane segment spans residues Ile143–Thr163. At Ser164 to Thr171 the chain is on the extracellular side. Residues Tyr172–Gly192 form a helical membrane-spanning segment. At His193–Gly204 the chain is on the cytoplasmic side. Residues Ile205–Leu225 form a helical membrane-spanning segment. At Lys226 to Arg235 the chain is on the extracellular side. The chain crosses the membrane as a helical span at residues Val236–Pro256. At Lys257–Arg286 the chain is on the cytoplasmic side. The chain crosses the membrane as a helical span at residues Ile287–Met307. Residues Thr308–Glu321 lie on the Extracellular side of the membrane. Residues Val322–Ala342 traverse the membrane as a helical segment. Asp343 is a topological domain (cytoplasmic). A helical transmembrane segment spans residues Tyr344–Met364. At Ser365–Leu377 the chain is on the extracellular side. Residues Ile378–Phe400 traverse the membrane as a helical segment. The Cytoplasmic portion of the chain corresponds to Glu401–Ala411. The chain crosses the membrane as a helical span at residues Ile412–Phe432. Over Leu433–Ala443 the chain is Extracellular. Residues Phe444–Val464 form a helical membrane-spanning segment. Residues Glu465–Ile505 lie on the Cytoplasmic side of the membrane. The interval Ala474 to Ile505 is disordered. Residues Thr494 to Ile505 show a composition bias toward basic and acidic residues.

This sequence belongs to the major facilitator superfamily. Monocarboxylate porter (TC 2.A.1.13) family.

The protein localises to the cell membrane. The protein resides in the basolateral cell membrane. The catalysed reaction is L-tryptophan(in) = L-tryptophan(out). The enzyme catalyses L-tyrosine(in) = L-tyrosine(out). It catalyses the reaction L-phenylalanine(in) = L-phenylalanine(out). It carries out the reaction 3,3',5-triiodo-L-thyronine(out) = 3,3',5-triiodo-L-thyronine(in). The catalysed reaction is L-thyroxine(out) = L-thyroxine(in). Sodium- and proton-independent thyroid hormones and aromatic acids transporter. Mediates both uptake and efflux of 3,5,3'-triiodothyronine (T3) and 3,5,3',5'-tetraiodothyronine (T4) with high affinity, suggesting a role in the homeostasis of thyroid hormone levels. Responsible for low affinity bidirectional transport of the aromatic amino acids, such as phenylalanine, tyrosine, tryptophan and L-3,4-dihydroxyphenylalanine (L-dopa). Plays an important role in homeostasis of aromatic amino acids. This is Monocarboxylate transporter 10 (slc16a10) from Danio rerio (Zebrafish).